Consider the following 393-residue polypeptide: MFRLYVLVMGVSAFTLQPAAHTGAARSCPVRGRHYKREFRLEGEPVALRCPQVPYQLWASVSPHINLTWHKNDSARMVPGEEETRMWAQDGALWLLPALQEDSGTYICTTRNASYCDKVSIELRVFENTDASLPFISYPQILTLSTFGVLVCPDLREFTRDKTDGKIQWYKDFLPLDKDNEKFLSVRGTTHLLVHDVALEDAGYYRCVLTFAHEGQQYNITRNIELRIKKKKEETIPVIISPLKTISASLGSRLTIPCKVFLGTGTPLTTMLWWTANDTHVESAYPGGRVTEGPRQEYSENNENYIEVPLIFDPVTRKDLNMVFKCFVRNTMGFQTLRTTVKEPPPTFSWGIVLAPLALAFLVLGGIWMHRRCKHRTGKADGLTVLRPHHQDF.

A signal peptide spans 1-13 (MFRLYVLVMGVSA). The Extracellular segment spans residues 14–347 (FTLQPAAHTG…RTTVKEPPPT (334 aa)). Cystine bridges form between C28/C116, C50/C108, and C152/C207. 3 Ig-like C2-type domains span residues 29–120 (PVRG…DKVS), 134–221 (PFIS…YNIT), and 237–342 (PVII…TTVK). N66, N72, and N112 each carry an N-linked (GlcNAc...) asparagine glycan. N-linked (GlcNAc...) asparagine glycans are attached at residues N219 and N277. A disulfide bridge links C258 with C326. A helical membrane pass occupies residues 348 to 368 (FSWGIVLAPLALAFLVLGGIW). Residues 369–393 (MHRRCKHRTGKADGLTVLRPHHQDF) are Cytoplasmic-facing.

Belongs to the interleukin-1 receptor family. As to quaternary structure, forms a non-signaling receptor complex consisting of IL1R2 and IL1RAP. A soluble form (sIL1R2) can also be produced by proteolytic cleavage at the cell surface (shedding) involving a metalloproteinase.

It localises to the secreted. The protein resides in the cell membrane. Functionally, non-signaling receptor for IL1A, IL1B and IL1RN. Reduces IL1B activities. Serves as a decoy receptor by competitive binding to IL1B and preventing its binding to IL1R1. Also modulates cellular response through non-signaling association with IL1RAP after binding to IL1B. IL1R2 (membrane and secreted forms) preferentially binds IL1B and poorly IL1A and IL1RN. The secreted IL1R2 recruits secreted IL1RAP with high affinity; this complex formation may be the dominant mechanism for neutralization of IL1B by secreted/soluble receptors. The chain is Interleukin-1 receptor type 2 (IL1R2) from Chlorocebus aethiops (Green monkey).